A 140-amino-acid chain; its full sequence is Ctenidin-1 (140 aa).

The signal sequence occupies residues 1–19 (MKHLIPLIVMASVVLAVYA). Gly-138 carries the glycine amide modification.

The protein belongs to the glycine-rich peptide family. Expressed in hemocytes (at protein level).

It is found in the secreted. Antimicrobial protein with bacteriostatic activity against the Gram-negative bacterium E.coli, and very weak activity against the Gram-positive bacterium S.aureus. Lacks activity against the yeast C.albicans. This Cupiennius salei (American wandering spider) protein is Ctenidin-1.